The primary structure comprises 121 residues: uncharacterized protein (121 aa).

Helical transmembrane passes span 26–46 (YACS…AVAT), 57–77 (SIPL…SVLI), and 90–110 (SFCF…LLCV).

Its subcellular location is the membrane. This is an uncharacterized protein from Saccharomyces cerevisiae (strain ATCC 204508 / S288c) (Baker's yeast).